We begin with the raw amino-acid sequence, 166 residues long: Phosphopantetheine adenylyltransferase (166 aa).

Ser9 lines the substrate pocket. Residues 9–10 (SF) and His17 each bind ATP. Positions 41, 74, and 88 each coordinate substrate. Residues 89–91 (GLR), Glu99, and 123–129 (YVHLSST) each bind ATP.

This sequence belongs to the bacterial CoaD family. Homohexamer. The cofactor is Mg(2+).

The protein resides in the cytoplasm. It carries out the reaction (R)-4'-phosphopantetheine + ATP + H(+) = 3'-dephospho-CoA + diphosphate. Its pathway is cofactor biosynthesis; coenzyme A biosynthesis; CoA from (R)-pantothenate: step 4/5. Functionally, reversibly transfers an adenylyl group from ATP to 4'-phosphopantetheine, yielding dephospho-CoA (dPCoA) and pyrophosphate. The chain is Phosphopantetheine adenylyltransferase from Paenarthrobacter aurescens (strain TC1).